The following is a 1225-amino-acid chain: Hyphally regulated cell wall protein 4 (1225 aa).

The first 20 residues, 1–20, serve as a signal peptide directing secretion; the sequence is MFSYSQAIRFIIFLLPICLT. Residues Asn97, Asn200, Asn488, Asn595, Asn634, and Asn694 are each glycosylated (N-linked (GlcNAc...) asparagine). The disordered stretch occupies residues 832 to 852; the sequence is DLDLPDDTTFTPSQSSSTTVP. Positions 838-852 are enriched in low complexity; sequence DTTFTPSQSSSTTVP. Residues Asn933 and Asn1035 are each glycosylated (N-linked (GlcNAc...) asparagine). The disordered stretch occupies residues 1049-1114; that stretch reads AYTQQDASTQ…NSHFEGTFIS (66 aa). N-linked (GlcNAc...) asparagine glycosylation is found at Asn1133, Asn1150, Asn1182, and Asn1193. Residue Ser1195 is the site of GPI-anchor amidated serine attachment. A propeptide spans 1196-1225 (removed in mature form); sequence GLISKSESVVLLIRPVMIFVFLAICVVIML.

It belongs to the HYR1/IFF family. Post-translationally, the GPI-anchor is attached to the protein in the endoplasmic reticulum and serves to target the protein to the cell surface. There, the glucosamine-inositol phospholipid moiety is cleaved off and the GPI-modified mannoprotein is covalently attached via its lipidless GPI glycan remnant to the 1,6-beta-glucan of the outer cell wall layer.

The protein localises to the secreted. Its subcellular location is the cell wall. The protein resides in the membrane. In terms of biological role, GPI-anchored cell wall protein involved in cell wall organization, hyphal growth, as well as in host-fungal interaction and virulence. This chain is Hyphally regulated cell wall protein 4 (HYR4), found in Candida albicans (strain SC5314 / ATCC MYA-2876) (Yeast).